We begin with the raw amino-acid sequence, 179 residues long: MKFLFDLFPVILFFAAFKLADIYTATAVAIGATVLQIGWVWFRHRKVEPMQWVSLLIIAVFGGATLVLHNETFIKWKPTVLYWMFAVGLLGSVIGWRKNLIRAMMEKQVTLPDPVWARLNAAWAGFFAAMGVLNLYVAYQFSTEAWVNFKLFGSMGLMLVFIVAQSVWLSRHMPENSQD.

The next 6 helical transmembrane spans lie at F3–Y23, T24–H44, P49–H69, W76–W96, A121–F141, and F149–L169.

It belongs to the YciB family.

Its subcellular location is the cell inner membrane. Its function is as follows. Plays a role in cell envelope biogenesis, maintenance of cell envelope integrity and membrane homeostasis. The polypeptide is Inner membrane-spanning protein YciB (Cupriavidus necator (strain ATCC 17699 / DSM 428 / KCTC 22496 / NCIMB 10442 / H16 / Stanier 337) (Ralstonia eutropha)).